The sequence spans 483 residues: ATP synthase subunit beta (483 aa).

169–176 is an ATP binding site; it reads GGAGVGKT.

Belongs to the ATPase alpha/beta chains family. In terms of assembly, F-type ATPases have 2 components, CF(1) - the catalytic core - and CF(0) - the membrane proton channel. CF(1) has five subunits: alpha(3), beta(3), gamma(1), delta(1), epsilon(1). CF(0) has three main subunits: a(1), b(2) and c(9-12). The alpha and beta chains form an alternating ring which encloses part of the gamma chain. CF(1) is attached to CF(0) by a central stalk formed by the gamma and epsilon chains, while a peripheral stalk is formed by the delta and b chains.

It is found in the cell membrane. It catalyses the reaction ATP + H2O + 4 H(+)(in) = ADP + phosphate + 5 H(+)(out). Produces ATP from ADP in the presence of a proton gradient across the membrane. The catalytic sites are hosted primarily by the beta subunits. The chain is ATP synthase subunit beta from Corynebacterium glutamicum (strain ATCC 13032 / DSM 20300 / JCM 1318 / BCRC 11384 / CCUG 27702 / LMG 3730 / NBRC 12168 / NCIMB 10025 / NRRL B-2784 / 534).